The sequence spans 293 residues: Protein PET54 (293 aa).

It is found in the mitochondrion inner membrane. In terms of biological role, activator of specific mitochondrial mRNAs. PET54 is involved in the excision of intron aI5-beta from pre-mRNA for cytochrome c oxidase I (COX1) and plays a role in promoting the translation of COX3. This chain is Protein PET54 (PET54), found in Saccharomyces cerevisiae (strain ATCC 204508 / S288c) (Baker's yeast).